A 204-amino-acid chain; its full sequence is Large ribosomal subunit protein bL25 (204 aa).

It belongs to the bacterial ribosomal protein bL25 family. CTC subfamily. In terms of assembly, part of the 50S ribosomal subunit; part of the 5S rRNA/L5/L18/L25 subcomplex. Contacts the 5S rRNA. Binds to the 5S rRNA independently of L5 and L18.

Functionally, this is one of the proteins that binds to the 5S RNA in the ribosome where it forms part of the central protuberance. The protein is Large ribosomal subunit protein bL25 of Pseudoalteromonas translucida (strain TAC 125).